We begin with the raw amino-acid sequence, 276 residues long: Non-heme chloroperoxidase (276 aa).

The region spanning proline 24–leucine 254 is the AB hydrolase-1 domain. Active-site residues include serine 97, aspartate 227, and histidine 256.

Belongs to the AB hydrolase superfamily. Bacterial non-heme haloperoxidase / perhydrolase family. In terms of assembly, homodimer.

This is Non-heme chloroperoxidase (cpo) from Streptomyces lividans.